The primary structure comprises 322 residues: Ribosomal RNA small subunit methyltransferase H (322 aa).

Residues 40 to 42 (GGH), Asp60, Phe84, Asp106, and Gln113 each bind S-adenosyl-L-methionine.

Belongs to the methyltransferase superfamily. RsmH family.

The protein localises to the cytoplasm. It carries out the reaction cytidine(1402) in 16S rRNA + S-adenosyl-L-methionine = N(4)-methylcytidine(1402) in 16S rRNA + S-adenosyl-L-homocysteine + H(+). In terms of biological role, specifically methylates the N4 position of cytidine in position 1402 (C1402) of 16S rRNA. The protein is Ribosomal RNA small subunit methyltransferase H of Mannheimia succiniciproducens (strain KCTC 0769BP / MBEL55E).